Reading from the N-terminus, the 272-residue chain is Shikimate dehydrogenase (NADP(+)) (272 aa).

Shikimate contacts are provided by residues S14–S16 and T61. K65 (proton acceptor) is an active-site residue. E77 is an NADP(+) binding site. N86 and D102 together coordinate shikimate. NADP(+)-binding positions include G126–A130, N149–K154, and M212. A shikimate-binding site is contributed by Y214. G237 contributes to the NADP(+) binding site.

This sequence belongs to the shikimate dehydrogenase family. As to quaternary structure, homodimer.

The catalysed reaction is shikimate + NADP(+) = 3-dehydroshikimate + NADPH + H(+). It participates in metabolic intermediate biosynthesis; chorismate biosynthesis; chorismate from D-erythrose 4-phosphate and phosphoenolpyruvate: step 4/7. Its function is as follows. Involved in the biosynthesis of the chorismate, which leads to the biosynthesis of aromatic amino acids. Catalyzes the reversible NADPH linked reduction of 3-dehydroshikimate (DHSA) to yield shikimate (SA). In Glaesserella parasuis serovar 5 (strain SH0165) (Haemophilus parasuis), this protein is Shikimate dehydrogenase (NADP(+)).